The chain runs to 93 residues: Guanine nucleotide-binding protein subunit gamma (93 aa).

The disordered stretch occupies residues Met-1–Met-22. Residue Cys-89 is the site of S-palmitoyl cysteine attachment. Cys-90 is modified (cysteine methyl ester). Cys-90 is lipidated: S-farnesyl cysteine. The propeptide at Val-91–Met-93 is removed in mature form.

This sequence belongs to the G protein gamma family. As to quaternary structure, g proteins are composed of 3 units, alpha, beta and gamma.

It localises to the membrane. This Neurospora crassa (strain ATCC 24698 / 74-OR23-1A / CBS 708.71 / DSM 1257 / FGSC 987) protein is Guanine nucleotide-binding protein subunit gamma (gng-1).